The following is a 99-amino-acid chain: Integration host factor subunit alpha (99 aa).

Belongs to the bacterial histone-like protein family. In terms of assembly, heterodimer of an alpha and a beta chain.

In terms of biological role, this protein is one of the two subunits of integration host factor, a specific DNA-binding protein that functions in genetic recombination as well as in transcriptional and translational control. This chain is Integration host factor subunit alpha (ihfA), found in Xanthomonas axonopodis pv. citri (strain 306).